Reading from the N-terminus, the 160-residue chain is Cytochrome c-type biogenesis protein CcmE (160 aa).

Residues 1–8 (MNPRRKKR) are Cytoplasmic-facing. The helical; Signal-anchor for type II membrane protein transmembrane segment at 9–29 (LGIILAIFFGISATVGLMVYA) threads the bilayer. Residues 30 to 160 (LNQNMDLFYT…TTEQKEGNAQ (131 aa)) lie on the Periplasmic side of the membrane. Heme contacts are provided by His-128 and Tyr-132.

The protein belongs to the CcmE/CycJ family.

The protein resides in the cell inner membrane. Its function is as follows. Heme chaperone required for the biogenesis of c-type cytochromes. Transiently binds heme delivered by CcmC and transfers the heme to apo-cytochromes in a process facilitated by CcmF and CcmH. In Vibrio atlanticus (strain LGP32) (Vibrio splendidus (strain Mel32)), this protein is Cytochrome c-type biogenesis protein CcmE.